An 87-amino-acid polypeptide reads, in one-letter code: Glutaredoxin (87 aa).

The Glutaredoxin domain occupies 1 to 87 (MFKVYGYDSN…GFDQLREYFK (87 aa)). Cysteines 14 and 17 form a disulfide.

Belongs to the glutaredoxin family.

Serves as a reducing agent for the phage-induced ribonucleotide reductase, but not for the bacterial ones. This specificity may be the result of sequence differences around the redox-active disulfide bond. The oxidized form accepts electrons from bacterial glutathione and will, in turn, reduce other small disulfides. Can also be reduced by NADPH and by bacterial thioredoxin reductase. The chain is Glutaredoxin (NRDC) from Enterobacteria phage T4 (Bacteriophage T4).